The sequence spans 70 residues: ATP synthase subunit c (70 aa).

2 consecutive transmembrane segments (helical) span residues Ile4 to Val24 and Phe47 to Val67.

It belongs to the ATPase C chain family. In terms of assembly, F-type ATPases have 2 components, F(1) - the catalytic core - and F(0) - the membrane proton channel. F(1) has five subunits: alpha(3), beta(3), gamma(1), delta(1), epsilon(1). F(0) has three main subunits: a(1), b(2) and c(10-14). The alpha and beta chains form an alternating ring which encloses part of the gamma chain. F(1) is attached to F(0) by a central stalk formed by the gamma and epsilon chains, while a peripheral stalk is formed by the delta and b chains.

It localises to the cell membrane. Functionally, f(1)F(0) ATP synthase produces ATP from ADP in the presence of a proton or sodium gradient. F-type ATPases consist of two structural domains, F(1) containing the extramembraneous catalytic core and F(0) containing the membrane proton channel, linked together by a central stalk and a peripheral stalk. During catalysis, ATP synthesis in the catalytic domain of F(1) is coupled via a rotary mechanism of the central stalk subunits to proton translocation. In terms of biological role, key component of the F(0) channel; it plays a direct role in translocation across the membrane. A homomeric c-ring of between 10-14 subunits forms the central stalk rotor element with the F(1) delta and epsilon subunits. The chain is ATP synthase subunit c from Lactiplantibacillus plantarum (strain ATCC BAA-793 / NCIMB 8826 / WCFS1) (Lactobacillus plantarum).